The sequence spans 132 residues: Small ribosomal subunit protein uS8 (132 aa).

This sequence belongs to the universal ribosomal protein uS8 family. As to quaternary structure, part of the 30S ribosomal subunit. Contacts proteins S5 and S12.

Functionally, one of the primary rRNA binding proteins, it binds directly to 16S rRNA central domain where it helps coordinate assembly of the platform of the 30S subunit. The sequence is that of Small ribosomal subunit protein uS8 from Heliobacterium modesticaldum (strain ATCC 51547 / Ice1).